Here is a 189-residue protein sequence, read N- to C-terminus: Peptidyl-tRNA hydrolase (189 aa).

Tyr16 is a binding site for tRNA. Catalysis depends on His21, which acts as the Proton acceptor. TRNA is bound by residues Phe67, Asn69, and Asn115.

It belongs to the PTH family. Monomer.

The protein localises to the cytoplasm. The enzyme catalyses an N-acyl-L-alpha-aminoacyl-tRNA + H2O = an N-acyl-L-amino acid + a tRNA + H(+). Its function is as follows. Hydrolyzes ribosome-free peptidyl-tRNAs (with 1 or more amino acids incorporated), which drop off the ribosome during protein synthesis, or as a result of ribosome stalling. In terms of biological role, catalyzes the release of premature peptidyl moieties from peptidyl-tRNA molecules trapped in stalled 50S ribosomal subunits, and thus maintains levels of free tRNAs and 50S ribosomes. This Legionella pneumophila (strain Corby) protein is Peptidyl-tRNA hydrolase.